Consider the following 154-residue polypeptide: Urease accessory protein UreE (154 aa).

Belongs to the UreE family.

The protein resides in the cytoplasm. In terms of biological role, involved in urease metallocenter assembly. Binds nickel. Probably functions as a nickel donor during metallocenter assembly. The protein is Urease accessory protein UreE of Rhizobium meliloti (strain 1021) (Ensifer meliloti).